The following is a 287-amino-acid chain: MNKTTNGWINGFIGVLIFSGSLPATRLAVSDFDPLFLTVCRAAIAGVLAGGLLLIFRQQHPAKRDLISLLVVAFGVVIGFPLLTALALQHVTSAHAIVFIGLLPLATAVFGVLRGGERPRPVFWIFSAAGSLLVAGFALIQGGGSSPLGDAYMLASIVVCGLGYAEGAKLSRRLGNWQVISWALVLSLPLMLPLSFFFTPDSWSAIGVPALLSLAYVSLFSMLIGFVFWYRGLAQGGIAAVGQLQLLQPFFGLLLASVILHEKVGWALVAVNIAVIMCVAAARRFAK.

A run of 10 helical transmembrane segments spans residues 4–24 (TTNG…SLPA), 36–56 (FLTV…LLIF), 66–86 (LISL…LTAL), 93–113 (SAHA…FGVL), 122–142 (VFWI…LIQG), 148–168 (LGDA…AEGA), 179–199 (VISW…FFFT), 208–228 (VPAL…GFVF), 237–259 (GIAA…ASVI), and 264–286 (VGWA…RRFA). EamA domains are found at residues 16 to 139 (LIFS…GFAL) and 158 to 284 (VVCG…AARR).

This sequence belongs to the EamA transporter family.

It is found in the cell membrane. This is an uncharacterized protein from Bacillus subtilis (strain 168).